The chain runs to 278 residues: S-formylglutathione hydrolase YeiG (278 aa).

Catalysis depends on charge relay system residues Ser145, Asp223, and His256.

Belongs to the esterase D family.

It catalyses the reaction S-formylglutathione + H2O = formate + glutathione + H(+). Its function is as follows. Serine hydrolase involved in the detoxification of formaldehyde. Hydrolyzes S-formylglutathione to glutathione and formate. The sequence is that of S-formylglutathione hydrolase YeiG (yeiG) from Escherichia coli O157:H7.